The chain runs to 962 residues: Glycine dehydrogenase (decarboxylating) (962 aa).

The residue at position 710 (Lys-710) is an N6-(pyridoxal phosphate)lysine.

Belongs to the GcvP family. The glycine cleavage system is composed of four proteins: P, T, L and H. The cofactor is pyridoxal 5'-phosphate.

The catalysed reaction is N(6)-[(R)-lipoyl]-L-lysyl-[glycine-cleavage complex H protein] + glycine + H(+) = N(6)-[(R)-S(8)-aminomethyldihydrolipoyl]-L-lysyl-[glycine-cleavage complex H protein] + CO2. Its function is as follows. The glycine cleavage system catalyzes the degradation of glycine. The P protein binds the alpha-amino group of glycine through its pyridoxal phosphate cofactor; CO(2) is released and the remaining methylamine moiety is then transferred to the lipoamide cofactor of the H protein. This chain is Glycine dehydrogenase (decarboxylating), found in Idiomarina loihiensis (strain ATCC BAA-735 / DSM 15497 / L2-TR).